We begin with the raw amino-acid sequence, 143 residues long: Large ribosomal subunit protein uL11 (143 aa).

This sequence belongs to the universal ribosomal protein uL11 family. In terms of assembly, part of the ribosomal stalk of the 50S ribosomal subunit. Interacts with L10 and the large rRNA to form the base of the stalk. L10 forms an elongated spine to which L12 dimers bind in a sequential fashion forming a multimeric L10(L12)X complex. Post-translationally, one or more lysine residues are methylated.

Its function is as follows. Forms part of the ribosomal stalk which helps the ribosome interact with GTP-bound translation factors. This chain is Large ribosomal subunit protein uL11, found in Burkholderia multivorans (strain ATCC 17616 / 249).